The primary structure comprises 155 residues: Large ribosomal subunit protein eL24 (155 aa).

Residues V119–R155 form a disordered region. The segment covering K124–K133 has biased composition (low complexity).

This sequence belongs to the eukaryotic ribosomal protein eL24 family.

The protein is Large ribosomal subunit protein eL24 (RpL24) of Drosophila melanogaster (Fruit fly).